The primary structure comprises 364 residues: Cobalt-precorrin-5B C(1)-methyltransferase (364 aa).

Belongs to the CbiD family.

The enzyme catalyses Co-precorrin-5B + S-adenosyl-L-methionine = Co-precorrin-6A + S-adenosyl-L-homocysteine. Its pathway is cofactor biosynthesis; adenosylcobalamin biosynthesis; cob(II)yrinate a,c-diamide from sirohydrochlorin (anaerobic route): step 6/10. Functionally, catalyzes the methylation of C-1 in cobalt-precorrin-5B to form cobalt-precorrin-6A. In Pseudomonas putida (strain ATCC 700007 / DSM 6899 / JCM 31910 / BCRC 17059 / LMG 24140 / F1), this protein is Cobalt-precorrin-5B C(1)-methyltransferase.